We begin with the raw amino-acid sequence, 353 residues long: Photosystem II protein D1 (353 aa).

The residue at position 2 (T2) is an N-acetylthreonine. Phosphothreonine is present on T2. 3 helical membrane-spanning segments follow: residues 29–46 (YIGW…TATS), 118–133 (HFLL…EWEL), and 142–156 (WIAV…AATA). Residue H118 coordinates chlorophyll a. Residue Y126 coordinates pheophytin a. [CaMn4O5] cluster-binding residues include D170 and E189. A helical membrane pass occupies residues 197-218 (FHMLGVAGVFGGSLFSAMHGSL). Chlorophyll a is bound at residue H198. A quinone-binding positions include H215 and 264–265 (SF). Position 215 (H215) interacts with Fe cation. H272 lines the Fe cation pocket. Residues 274–288 (FLAAWPVAGIWFTAL) form a helical membrane-spanning segment. Residues H332, E333, D342, and A344 each contribute to the [CaMn4O5] cluster site. The propeptide occupies 345–353 (AVESISIGG).

This sequence belongs to the reaction center PufL/M/PsbA/D family. PSII is composed of 1 copy each of membrane proteins PsbA, PsbB, PsbC, PsbD, PsbE, PsbF, PsbH, PsbI, PsbJ, PsbK, PsbL, PsbM, PsbT, PsbX, PsbY, PsbZ, Psb30/Ycf12, at least 3 peripheral proteins of the oxygen-evolving complex and a large number of cofactors. It forms dimeric complexes. It depends on The D1/D2 heterodimer binds P680, chlorophylls that are the primary electron donor of PSII, and subsequent electron acceptors. It shares a non-heme iron and each subunit binds pheophytin, quinone, additional chlorophylls, carotenoids and lipids. D1 provides most of the ligands for the Mn4-Ca-O5 cluster of the oxygen-evolving complex (OEC). There is also a Cl(-1) ion associated with D1 and D2, which is required for oxygen evolution. The PSII complex binds additional chlorophylls, carotenoids and specific lipids. as a cofactor. Post-translationally, tyr-161 forms a radical intermediate that is referred to as redox-active TyrZ, YZ or Y-Z. C-terminally processed by CTPA; processing is essential to allow assembly of the oxygen-evolving complex and thus photosynthetic growth.

It is found in the plastid. The protein localises to the chloroplast thylakoid membrane. The enzyme catalyses 2 a plastoquinone + 4 hnu + 2 H2O = 2 a plastoquinol + O2. Functionally, photosystem II (PSII) is a light-driven water:plastoquinone oxidoreductase that uses light energy to abstract electrons from H(2)O, generating O(2) and a proton gradient subsequently used for ATP formation. It consists of a core antenna complex that captures photons, and an electron transfer chain that converts photonic excitation into a charge separation. The D1/D2 (PsbA/PsbD) reaction center heterodimer binds P680, the primary electron donor of PSII as well as several subsequent electron acceptors. The protein is Photosystem II protein D1 of Pinus koraiensis (Korean pine).